The primary structure comprises 271 residues: Phosphatidylglycerol--prolipoprotein diacylglyceryl transferase (271 aa).

4 helical membrane passes run W25–V45, Y60–Y80, F103–L123, and A131–G151. Position 152 (R152) interacts with a 1,2-diacyl-sn-glycero-3-phospho-(1'-sn-glycerol). The next 3 helical transmembrane spans lie at P181–A201, G209–Y229, and G235–I255.

The protein belongs to the Lgt family.

Its subcellular location is the cell inner membrane. It catalyses the reaction L-cysteinyl-[prolipoprotein] + a 1,2-diacyl-sn-glycero-3-phospho-(1'-sn-glycerol) = an S-1,2-diacyl-sn-glyceryl-L-cysteinyl-[prolipoprotein] + sn-glycerol 1-phosphate + H(+). The protein operates within protein modification; lipoprotein biosynthesis (diacylglyceryl transfer). In terms of biological role, catalyzes the transfer of the diacylglyceryl group from phosphatidylglycerol to the sulfhydryl group of the N-terminal cysteine of a prolipoprotein, the first step in the formation of mature lipoproteins. This Campylobacter jejuni (strain RM1221) protein is Phosphatidylglycerol--prolipoprotein diacylglyceryl transferase.